The following is a 265-amino-acid chain: MRILVSNDDGIYSPGLWALVKRLKEVGEVIVVAPDREQSATGTQVTLRQPLRVQKTHPLIPGIEAYAVEGSPCDCVILGLAKLITEPVDLVVSGINHGLNLGDDVLISGTVGAALQGYLRNIPSIAVSIPVTMEEPENLDSAACITAEVSRRIQNGDITKNSFLNINIPDLPLSQIEELRVTPLAHKTHIETVEEGHDGRKRYFWLRRRQLSSADNKKTDIWAIENGYITISALHERLFQQPVFTLKDAETAGILAAARSCQDKI.

A divalent metal cation-binding residues include aspartate 8, aspartate 9, serine 39, and asparagine 96.

The protein belongs to the SurE nucleotidase family. The cofactor is a divalent metal cation.

It is found in the cytoplasm. The catalysed reaction is a ribonucleoside 5'-phosphate + H2O = a ribonucleoside + phosphate. Nucleotidase that shows phosphatase activity on nucleoside 5'-monophosphates. The chain is 5'-nucleotidase SurE from Dehalococcoides mccartyi (strain ATCC BAA-2100 / JCM 16839 / KCTC 5957 / BAV1).